The following is a 144-amino-acid chain: Large ribosomal subunit protein uL15 (144 aa).

Positions 1–51 are disordered; it reads MRLNTLSPAEGAKHSAKRLGRGIGSGLGKTGGRGHKGQKSRTGGKVRRGFE. Positions 21–31 are enriched in gly residues; it reads RGIGSGLGKTG. Basic residues predominate over residues 32–47; sequence GRGHKGQKSRTGGKVR.

The protein belongs to the universal ribosomal protein uL15 family. As to quaternary structure, part of the 50S ribosomal subunit.

Functionally, binds to the 23S rRNA. The polypeptide is Large ribosomal subunit protein uL15 (Actinobacillus succinogenes (strain ATCC 55618 / DSM 22257 / CCUG 43843 / 130Z)).